The primary structure comprises 72 residues: Conotoxin Gla(2)-TxVI/B (72 aa).

An N-terminal signal peptide occupies residues 1–19 (MEKLIILLLVAAVLMSTQA). A propeptide spanning residues 20–44 (LFQEKRTMKKIDFLSKGKADAEKQR) is cleaved from the precursor. Disulfide bonds link C48–C62, C55–C66, and C61–C70. E56 carries the post-translational modification 4-carboxyglutamate. 4-hydroxyproline is present on P58. Residue S71 is modified to Serine amide.

Post-translationally, brominated at one of the Trp residues. As to expression, expressed by the venom duct.

The protein resides in the secreted. This is Conotoxin Gla(2)-TxVI/B from Conus textile (Cloth-of-gold cone).